Consider the following 203-residue polypeptide: Urease accessory protein UreG (203 aa).

14–21 (GPVGSGKT) serves as a coordination point for GTP.

This sequence belongs to the SIMIBI class G3E GTPase family. UreG subfamily. As to quaternary structure, homodimer. UreD, UreF and UreG form a complex that acts as a GTP-hydrolysis-dependent molecular chaperone, activating the urease apoprotein by helping to assemble the nickel containing metallocenter of UreC. The UreE protein probably delivers the nickel.

It localises to the cytoplasm. Facilitates the functional incorporation of the urease nickel metallocenter. This process requires GTP hydrolysis, probably effectuated by UreG. The protein is Urease accessory protein UreG of Rhizobium leguminosarum bv. viciae.